The primary structure comprises 251 residues: Eukaryotic translation initiation factor 4E-3 (251 aa).

The tract at residues 200–251 is disordered; that stretch reads DSSARTSSTVKPRICLPAKDPAPVKEKGPAATTSPSNPGTEATGTSPATPTP. Positions 230-251 are enriched in polar residues; the sequence is ATTSPSNPGTEATGTSPATPTP.

Belongs to the eukaryotic initiation factor 4E family. As to quaternary structure, eIF4F is a multi-subunit complex, the composition of which varies with external and internal environmental conditions. It is composed of at least eIF4A, eIF4E and eIF4G. eIF4E is also known to interact with other partners. Interacts with mxt. Component of the pid-1 variant of the PETISCO complex (also called the pid-3, erh-2, tofu-6, and ife-3 small RNA complex) containing at least pid-1, tofu-6, ife-3, pid-3, and erh-2, which is required for the biogenesis of a class of 21 nucleotide PIWI-interacting RNAs (piRNAs) that possess a uracil residue at the 5'-end (also called 21U-RNAs). Component of the tost-1 variant of the PETISCO complex (also called the pid-3, erh-2, tofu-6, and ife-3 small RNA complex) containing at least tost-1, tofu-6, ife-3, pid-3, and erh-2, which plays an essential role in embryogenesis. Within the pid-1 and tost-1 variants of the PETISCO complexes interacts with tofu-6 (via C-terminus). In contrast to the pid-1 variant of the PETISCO complex, the tost-1 variant of the PETISCO complex plays a minor role in the biogenesis of 21U-RNAs. As to expression, highly expressed in the germline (at protein level).

It is found in the cytoplasmic granule. The protein resides in the cytoplasm. Its subcellular location is the perinuclear region. In terms of biological role, recognizes and binds the 7-methylguanosine-containing mRNA cap during an early step in the initiation of protein synthesis and facilitates ribosome binding by inducing the unwinding of the mRNAs secondary structures. All 5 eIF4E proteins bind monomethyl cap structures. Only ife-1, ife-2 and ife-5 bind trimethyl cap structures which result from trans-splicing. Translation of trimethyl cap structure mRNAs may be regulated by intracellular redox state; disulfide bonds change the width and depth of the cap-binding cavity determining selectivity to mRNA caps. Ife-3 is essential for viability. Component of the pid-1 and tost-1 variants of the PETISCO complexes, which have roles in the biogenesis of a class of 21 nucleotide PIWI-interacting RNAs (piRNAs) that possess a uracil residue at the 5'-end (also called 21U-RNAs) and embryogenesis, respectively. Within the pid-1 variant of the PETISCO complex binds to capped 21U-RNA precursor molecules, possibly playing a role in the processing of the 5' end of the molecules to promote binding of other complex components such as pid-3. However, it is not essential for the biogenesis of 21U-RNAs by itself. Within the tost-1 variant of the PETISCO complex binds to splice leader SL1 RNA fragments to possibly play a role in their processing. This Caenorhabditis elegans protein is Eukaryotic translation initiation factor 4E-3.